The primary structure comprises 494 residues: O-acetyltransferase ptmV (494 aa).

The interval 181–203 (ESQQDSREKLRHSGGPPDPRFDH) is disordered.

The protein belongs to the fumigaclavine B O-acetyltransferase family. Monomer.

The protein operates within secondary metabolite biosynthesis. Functionally, O-acetyltransferase; part of the gene cluster that mediates the biosynthesis of the indole diterpenes penitrems. The geranylgeranyl diphosphate (GGPP) synthase ptmG catalyzes the first step in penitrem biosynthesis via conversion of farnesyl pyrophosphate and isopentyl pyrophosphate into geranylgeranyl pyrophosphate (GGPP). Condensation of indole-3-glycerol phosphate with GGPP by the prenyl transferase ptmC then forms 3-geranylgeranylindole (3-GGI). Epoxidation by the FAD-dependent monooxygenase ptmM leads to a epoxidized-GGI that is substrate of the terpene cyclase ptmB for cyclization to yield paspaline. Paspaline is subsequently converted to 13-desoxypaxilline by the cytochrome P450 monooxygenase ptmP, the latter being then converted to paxilline by the cytochrome P450 monooxygenase ptmQ. Paxilline is converted to beta-paxitriol via C-10 ketoreduction by the short-chain dehydrogenase ptmH which can be monoprenylated at the C-20 by the indole diterpene prenyltransferase ptmD. A two-step elimination (acetylation and elimination) process performed by the O-acetyltransferase ptmV and ptmI leads to the production of the prenylated form of penijanthine. The FAD-linked oxidoreductase ptmO then converts the prenylated form of penijanthine into PC-M5 which is in turn transformed into PC-M4 by the aromatic dimethylallyltransferase ptmE. Five sequential oxidative transformations performed by the cytochrome P450 monooxygenases ptmK, ptmU, ptmL, ptmN and ptmJ yield the various penitrem compounds. PtmK, ptmU and ptmM are involved in the formation of the key bicyclic ring of penitrem C via the formation of the intermediates secopenitrem D and penitrem D. PtmL catalyzes the epoxidation of penitrem D and C to yield penitrem B and F, respectively. PtmJ catalyzes the last benzylic hydroxylation to convert penitrem B to prenitrem E and penitrem F to penitrem A. This chain is O-acetyltransferase ptmV, found in Penicillium ochrochloron.